A 331-amino-acid chain; its full sequence is Major ferric iron-binding protein (331 aa).

A signal peptide spans 1–22 (MKTSIRYALLAAALTAATPALA). Positions 31, 79, 217, and 218 each coordinate Fe cation.

Belongs to the bacterial solute-binding protein 1 family.

It localises to the periplasm. Its function is as follows. This protein may be a central component in the iron-acquisition system. This Neisseria meningitidis serogroup B (strain ATCC BAA-335 / MC58) protein is Major ferric iron-binding protein (fbpA).